We begin with the raw amino-acid sequence, 284 residues long: Probable plastid-lipid-associated protein 10, chloroplastic (284 aa).

The transit peptide at 1–40 (MDRIASATFSCPAISLSRVCRISPFGLNIKTNHRKRFSCR) directs the protein to the chloroplast.

This sequence belongs to the PAP/fibrillin family.

It localises to the plastid. It is found in the chloroplast. Its subcellular location is the plastoglobule. In Arabidopsis thaliana (Mouse-ear cress), this protein is Probable plastid-lipid-associated protein 10, chloroplastic (PAP10).